The following is a 99-amino-acid chain: uncharacterized protein (99 aa).

The next 3 helical transmembrane spans lie at 7-29 (FFISYFLPLISFLGLLNLLYTLY), 39-61 (FISSSVVSIFTILFGTMPYARYN), and 68-90 (FCNLMVFVLPVSFFLVSLLLWLL).

The protein resides in the cell membrane. This is an uncharacterized protein from Archaeoglobus fulgidus (strain ATCC 49558 / DSM 4304 / JCM 9628 / NBRC 100126 / VC-16).